A 78-amino-acid chain; its full sequence is Large ribosomal subunit protein bL28 (78 aa).

It belongs to the bacterial ribosomal protein bL28 family.

The chain is Large ribosomal subunit protein bL28 from Glaesserella parasuis serovar 5 (strain SH0165) (Haemophilus parasuis).